The chain runs to 399 residues: Glutamyl-tRNA reductase (399 aa).

Substrate contacts are provided by residues 45–48 (TCNR), S93, 98–100 (EDQ), and Q104. Residue C46 is the Nucleophile of the active site. NADP(+) is bound at residue 173-178 (GAGKMG).

Belongs to the glutamyl-tRNA reductase family. As to quaternary structure, homodimer.

It catalyses the reaction (S)-4-amino-5-oxopentanoate + tRNA(Glu) + NADP(+) = L-glutamyl-tRNA(Glu) + NADPH + H(+). It functions in the pathway porphyrin-containing compound metabolism; protoporphyrin-IX biosynthesis; 5-aminolevulinate from L-glutamyl-tRNA(Glu): step 1/2. In terms of biological role, catalyzes the NADPH-dependent reduction of glutamyl-tRNA(Glu) to glutamate 1-semialdehyde (GSA). This Methanobrevibacter smithii (strain ATCC 35061 / DSM 861 / OCM 144 / PS) protein is Glutamyl-tRNA reductase.